The following is a 344-amino-acid chain: Dimethyladenosine transferase 1, mitochondrial (344 aa).

Residues 1–27 (MATPGALAKFRLPPLPTIGEIVKLFNL) constitute a mitochondrion transit peptide. The S-adenosyl-L-methionine site is built by asparagine 36, leucine 38, glycine 63, glutamate 85, lysine 86, aspartate 111, isoleucine 112, and asparagine 141.

The protein belongs to the class I-like SAM-binding methyltransferase superfamily. rRNA adenine N(6)-methyltransferase family. KsgA subfamily.

Its subcellular location is the mitochondrion. It carries out the reaction adenosine(N)/adenosine(N+1) in rRNA + 4 S-adenosyl-L-methionine = N(6)-dimethyladenosine(N)/N(6)-dimethyladenosine(N+1) in rRNA + 4 S-adenosyl-L-homocysteine + 4 H(+). Mitochondrial methyltransferase which uses S-adenosyl methionine to dimethylate two highly conserved adjacent adenosine residues (A1583 and A1584) within the loop of helix 45 at the 3-prime end of 12S rRNA, thereby regulating the assembly or stability of the small subunit of the mitochondrial ribosome. Also required for basal transcription of mitochondrial DNA, probably via its interaction with POLRMT and TFAM. Stimulates transcription independently of the methyltransferase activity. The polypeptide is Dimethyladenosine transferase 1, mitochondrial (tfb1m.L) (Xenopus laevis (African clawed frog)).